Consider the following 389-residue polypeptide: Na(+)/H(+) antiporter NhaA (389 aa).

11 helical membrane passes run 24–44, 56–76, 94–114, 122–142, 152–172, 176–196, 216–236, 259–279, 291–311, 326–346, and 363–383; these read ILLI…AGPA, LSIE…FVGL, LLPI…HYTL, AGTG…LALL, VFLT…IAMF, QFSL…LVLN, FLML…AFAI, PVAF…VIGS, LGII…LSFV, WTHI…SIFI, and MAIL…LSFF.

It belongs to the NhaA Na(+)/H(+) (TC 2.A.33) antiporter family.

The protein resides in the cell inner membrane. The enzyme catalyses Na(+)(in) + 2 H(+)(out) = Na(+)(out) + 2 H(+)(in). Na(+)/H(+) antiporter that extrudes sodium in exchange for external protons. This Dechloromonas aromatica (strain RCB) protein is Na(+)/H(+) antiporter NhaA.